The chain runs to 390 residues: Caveolae-associated protein 1 (390 aa).

Met1 is modified (N-acetylmethionine). The segment at Met1–Ser40 is disordered. Residues Met1–Lys98 are required for homotrimerization and for interaction with CAVIN2 and CAVIN3. A compositionally biased stretch (low complexity) spans Pro22 to Ser40. Phosphoserine is present on residues Ser36, Ser40, and Ser46. A nuclear export signal region spans residues Val52–Ile62. A leucine-zipper 1 region spans residues Leu53–Leu75. Residue Lys116 forms a Glycyl lysine isopeptide (Lys-Gly) (interchain with G-Cter in SUMO2) linkage. A Phosphoserine modification is found at Ser118. Lys122 is covalently cross-linked (Glycyl lysine isopeptide (Lys-Gly) (interchain with G-Cter in SUMO2)). The nuclear localization signal stretch occupies residues Lys136–Lys152. At Tyr156 the chain carries Phosphotyrosine. A Glycyl lysine isopeptide (Lys-Gly) (interchain with G-Cter in SUMO1); alternate cross-link involves residue Lys161. Lys161 is covalently cross-linked (Glycyl lysine isopeptide (Lys-Gly) (interchain with G-Cter in SUMO2); alternate). A Glycyl lysine isopeptide (Lys-Gly) (interchain with G-Cter in SUMO2) cross-link involves residue Lys165. The leucine-zipper 2 stretch occupies residues Leu166–Leu186. Residues Ser167 and Ser169 each carry the phosphoserine modification. A Glycyl lysine isopeptide (Lys-Gly) (interchain with G-Cter in SUMO2) cross-link involves residue Lys170. Residues Ser171 and Ser175 each carry the phosphoserine modification. Basic and acidic residues predominate over residues Leu172–Lys181. A disordered region spans residues Leu172–Leu201. Residues Glu182–Leu201 show a composition bias toward acidic residues. Residues Leu199–Val282 adopt a coiled-coil conformation. Phosphoserine occurs at positions 202 and 203. Residues Lys233–Arg249 are nuclear localization signal. The interval Leu257 to Leu297 is leucine-zipper 3. Ser300 bears the Phosphoserine mark. Position 302 is a phosphothreonine (Thr302). At Tyr308 the chain carries Phosphotyrosine. A Glycyl lysine isopeptide (Lys-Gly) (interchain with G-Cter in SUMO2) cross-link involves residue Lys326. Residues Val344–Ser366 are disordered. A compositionally biased stretch (basic and acidic residues) spans Gly352 to Ser365. Ser365, Ser366, Ser379, Ser387, and Ser389 each carry phosphoserine.

Belongs to the CAVIN family. Component of the CAVIN complex composed of CAVIN1, CAVIN2, CAVIN3 and CAVIN4. Homotrimer. Interacts with TTF1. Interacts with RNA polymerase I subunit POLR1A/RPA1. Binds the 3' end of pre-rRNA. Interacts with transcription factor ZNF148. Interacts with LIPE in the adipocyte cytoplasm. Interacts with CAV1 and CAVIN3. Interacts with CAVIN2. Interacts with CAVIN4 and CAV3. Post-translationally, phosphorylated. Present in active and inactive forms. Changes in phosphorylation pattern may alter activity. Phosphorylation at Tyr-156 is essential for its functionin the regulation of ribosomal transcriptional activity. In terms of processing, five truncated forms are found in the caveolae. These are thought to be the result of proteolysis and may be phosphorylation-dependent. Monoubiquitinated.

The protein localises to the membrane. It is found in the caveola. The protein resides in the cell membrane. It localises to the microsome. Its subcellular location is the endoplasmic reticulum. The protein localises to the cytoplasm. It is found in the cytosol. The protein resides in the mitochondrion. It localises to the nucleus. Functionally, plays an important role in caveolae formation and organization. Essential for the formation of caveolae in all tissues. Core component of the CAVIN complex which is essential for recruitment of the complex to the caveolae in presence of calveolin-1 (CAV1). Essential for normal oligomerization of CAV1. Promotes ribosomal transcriptional activity in response to metabolic challenges in the adipocytes and plays an important role in the formation of the ribosomal transcriptional loop. Dissociates transcription complexes paused by DNA-bound TTF1, thereby releasing both RNA polymerase I and pre-RNA from the template. The caveolae biogenesis pathway is required for the secretion of proteins such as GASK1A. This is Caveolae-associated protein 1 from Homo sapiens (Human).